Here is a 351-residue protein sequence, read N- to C-terminus: Uroporphyrinogen decarboxylase (351 aa).

Substrate contacts are provided by residues 32 to 36, Phe51, Asp82, Tyr157, Ser211, and His326; that span reads RQAGR.

The protein belongs to the uroporphyrinogen decarboxylase family. Homodimer.

It localises to the cytoplasm. The catalysed reaction is uroporphyrinogen III + 4 H(+) = coproporphyrinogen III + 4 CO2. It functions in the pathway porphyrin-containing compound metabolism; protoporphyrin-IX biosynthesis; coproporphyrinogen-III from 5-aminolevulinate: step 4/4. Functionally, catalyzes the decarboxylation of four acetate groups of uroporphyrinogen III to yield coproporphyrinogen III. This Caulobacter vibrioides (strain ATCC 19089 / CIP 103742 / CB 15) (Caulobacter crescentus) protein is Uroporphyrinogen decarboxylase.